The sequence spans 326 residues: Flotillin-like protein FloA (326 aa).

The chain crosses the membrane as a helical span at residues 3 to 23 (FTTIVVILLVIACIVVLFFIG).

This sequence belongs to the flotillin-like FloA family. In terms of assembly, homooligomerizes.

The protein localises to the cell membrane. Its subcellular location is the membrane raft. Its function is as follows. Found in functional membrane microdomains (FMM) that may be equivalent to eukaryotic membrane rafts. FMMs are highly dynamic and increase in number as cells age. Flotillins are thought to be important factors in membrane fluidity. The chain is Flotillin-like protein FloA from Desulforapulum autotrophicum (strain ATCC 43914 / DSM 3382 / VKM B-1955 / HRM2) (Desulfobacterium autotrophicum).